Here is a 749-residue protein sequence, read N- to C-terminus: Amyloid-beta A4 precursor protein-binding family A member 2 (749 aa).

3 disordered regions span residues 1 to 94, 130 to 220, and 238 to 344; these read MAHR…PEEE, DTDE…GDLE, and SMTS…NIPE. Serine 11 bears the Phosphoserine mark. Over residues 70 to 80 the composition is skewed to polar residues; that stretch reads GDSSSDYVNNT. Composition is skewed to acidic residues over residues 81 to 94 and 131 to 142; these read SEEE…PEEE and TDECQEAVEEWT. An STXBP1-binding region spans residues 185 to 270; it reads HYCASKEGYQ…SVEACPPIKA (86 aa). A Phosphoserine modification is found at serine 208. Residues 238 to 247 show a composition bias toward polar residues; that stretch reads SMTSITSASE. A compositionally biased stretch (basic and acidic residues) spans 305–315; sequence RTPEERLKWPH. In terms of domain architecture, PID spans 368–555; the sequence is DGIIFAANYL…IINTQEMYND (188 aa). PDZ domains lie at 568 to 654 and 659 to 734; these read ELQL…IVSC and TVLI…TMPA.

In terms of assembly, part of a multimeric complex containing STXBP1 and syntaxin-1. Binds to the cytoplasmic domain of amyloid-beta protein, and to the nuclear factor NF-kappa-B/p65 via its PDZ domain. Interacts with the N-terminal domain of NECAB3. As to expression, brain.

Putative function in synaptic vesicle exocytosis by binding to STXBP1, an essential component of the synaptic vesicle exocytotic machinery. May modulate processing of the amyloid-beta precursor protein (APP) and hence formation of APP-beta. The chain is Amyloid-beta A4 precursor protein-binding family A member 2 (APBA2) from Homo sapiens (Human).